The sequence spans 211 residues: FMN-dependent NADH:quinone oxidoreductase 2 (211 aa).

FMN-binding positions include Ser-10 and 17 to 19 (SRS).

This sequence belongs to the azoreductase type 1 family. In terms of assembly, homodimer. FMN is required as a cofactor.

The catalysed reaction is 2 a quinone + NADH + H(+) = 2 a 1,4-benzosemiquinone + NAD(+). It catalyses the reaction N,N-dimethyl-1,4-phenylenediamine + anthranilate + 2 NAD(+) = 2-(4-dimethylaminophenyl)diazenylbenzoate + 2 NADH + 2 H(+). In terms of biological role, quinone reductase that provides resistance to thiol-specific stress caused by electrophilic quinones. Also exhibits azoreductase activity. Catalyzes the reductive cleavage of the azo bond in aromatic azo compounds to the corresponding amines. This Listeria innocua serovar 6a (strain ATCC BAA-680 / CLIP 11262) protein is FMN-dependent NADH:quinone oxidoreductase 2.